The sequence spans 348 residues: Eukaryotic translation initiation factor 3 subunit I (348 aa).

6 WD repeats span residues 8–49 (GHER…GTFE), 51–91 (HMGT…YTYE), 93–135 (PTPV…PKNQ), 147–186 (DGAK…FIDS), 196–238 (EKIH…KVYK), and 294–333 (GHFG…YDFE).

Belongs to the eIF-3 subunit I family. In terms of assembly, component of the eukaryotic translation initiation factor 3 (eIF-3) complex.

It is found in the cytoplasm. Its function is as follows. Component of the eukaryotic translation initiation factor 3 (eIF-3) complex, which is involved in protein synthesis of a specialized repertoire of mRNAs and, together with other initiation factors, stimulates binding of mRNA and methionyl-tRNAi to the 40S ribosome. The eIF-3 complex specifically targets and initiates translation of a subset of mRNAs involved in cell proliferation. This chain is Eukaryotic translation initiation factor 3 subunit I, found in Meyerozyma guilliermondii (strain ATCC 6260 / CBS 566 / DSM 6381 / JCM 1539 / NBRC 10279 / NRRL Y-324) (Yeast).